We begin with the raw amino-acid sequence, 484 residues long: MSFRKVVRQSKFRHVFGQPVKNDQCYEDIRVSRVTWDSTFCAVNPKFLAVIVEASGGGAFMVLPLNKTGRIDKAYPTVCGHTGPVLDIDWCPHNDEVIASGSEDCTVMVWQIPENGLTSPLTEPVVVLEGHTKRVGIITWHPTARNVLLSAGCDNVVLIWNVGTAEELYRLDSLHPDLIYNVSWNHNGSLFCSACKDKSVRIIDPRRGTLVAEREKAHEGARPMRAIFLADGKVFTTGFSRMSERQLALWDPENLEEPMALQELDSSNGALLPFYDPDTSVVYVCGKGDSSIRYFEITDEPPYIHFLNTFTSKEPQRGMGSMPKRGLEVSKCEIARFYKLHERKCEPIVMTVPRKSDLFQDDLYPDTAGPEAALEAEDWVSGQDANPILISLREAYVPSKQRDLKVSRRNVLSDSRPASYSRSGASTATAVTDVPSGNLAGAGEAGKLEEVMQELRALRMLVKEQGERISRLEEQLGRMENGDT.

A Phosphoserine modification is found at serine 2. 5 WD repeats span residues 80 to 120 (GHTG…LTSP), 130 to 170 (GHTK…ELYR), 174 to 213 (LHPD…LVAE), 217 to 260 (AHEG…EPMA), and 265 to 305 (DSSN…PYIH). Residues 404–446 (LKVSRRNVLSDSRPASYSRSGASTATAVTDVPSGNLAGAGEAG) form a disordered region. Over residues 410 to 430 (NVLSDSRPASYSRSGASTATA) the composition is skewed to polar residues. Residues 444–482 (EAGKLEEVMQELRALRMLVKEQGERISRLEEQLGRMENG) are a coiled coil.

The protein belongs to the WD repeat coronin family. In terms of assembly, forms homooligomers, but does not form complexes with the other coronins. Interacts with Arp2/3 complex components, including ACTR2, ARPC1B and ARPC2. Binds actin. Phosphorylation on Ser-2 regulates the interaction with the Arp2/3 complex and cell motility in fibroblasts. Phosphorylation does not seem to affect subcellular location. As to expression, ubiquitous.

Its subcellular location is the cytoplasm. It localises to the cytoskeleton. The protein resides in the stress fiber. Regulates leading edge dynamics and cell motility in fibroblasts. May be involved in cytokinesis and signal transduction. This is Coronin-1B (Coro1b) from Mus musculus (Mouse).